A 494-amino-acid chain; its full sequence is UPF0371 protein SPCG_0344 (494 aa).

This sequence belongs to the UPF0371 family.

The sequence is that of UPF0371 protein SPCG_0344 from Streptococcus pneumoniae (strain CGSP14).